The following is a 297-amino-acid chain: Putative lipid kinase MamU (297 aa).

Residues 43–131 form the DAGKc domain; that stretch reads EGKDMGRMVR…MDVGRVNDRY (89 aa). An ATP-binding site is contributed by 68–74; the sequence is GDGSLSR. Glutamate 274 (proton acceptor) is an active-site residue.

The protein belongs to the diacylglycerol/lipid kinase family.

The protein resides in the cytoplasm. Functionally, might phosphorylate lipids. In Magnetospirillum gryphiswaldense (strain DSM 6361 / JCM 21280 / NBRC 15271 / MSR-1), this protein is Putative lipid kinase MamU.